The sequence spans 911 residues: Facilitated trehalose transporter Tret1 (911 aa).

Positions 1 to 256 (MSGRDNRGAG…RIGFQQQKAT (256 aa)) are disordered. Residues 1–446 (MSGRDNRGAG…VYRPTTNPIY (446 aa)) lie on the Cytoplasmic side of the membrane. Over residues 8–19 (GAGGGGGGGGGG) the composition is skewed to gly residues. Residues 32 to 50 (KLKEKLTRAGEELGYHRVE) show a composition bias toward basic and acidic residues. 3 stretches are compositionally biased toward low complexity: residues 51–64 (SNLS…SLDT), 76–129 (AAPQ…QQLR), and 156–166 (QQIHVQQQQQQ). S302, S303, and S304 each carry phosphoserine. Residues 334–355 (VLQGSSTDSDEEGDDAEHKRLI) are disordered. S374 and S376 each carry phosphoserine. The interval 380–402 (FLTSRQNFQQQRSISTDSRKSRR) is disordered. The span at 384–395 (RQNFQQQRSIST) shows a compositional bias: polar residues. A helical transmembrane segment spans residues 447–467 (IWTQVLAALSVSLGSLVVGFA). At 468-494 (SAYTSPALVSMTNTNLTSFVVTPQAAS) the chain is on the extracellular side. N-linked (GlcNAc...) asparagine glycosylation occurs at N482. Residues 495–515 (WVGGIMPLAGLAGGIAGGPFI) form a helical membrane-spanning segment. At 516–527 (EYLGRRNTILAT) the chain is on the cytoplasmic side. Residues 528–548 (AVPFIVSWLLIACAVNVIMVL) traverse the membrane as a helical segment. At 549–551 (CGR) the chain is on the extracellular side. Residues 552–572 (FLAGFCVGIASLSLPVYLGET) form a helical membrane-spanning segment. At 573-578 (VQPEVR) the chain is on the cytoplasmic side. Residues 579–599 (GTLGLLPTAFGNIGILLCFVA) traverse the membrane as a helical segment. The Extracellular segment spans residues 600–606 (GTYMDWS). Residues 607–627 (MLAFLGASLPVPFLILMFLIP) traverse the membrane as a helical segment. Residues 628 to 690 (ETPRWYVSRG…ELLKRSNLKP (63 aa)) are Cytoplasmic-facing. Residues 691–711 (LSISLGLMFFQQLSGINAVIF) form a helical membrane-spanning segment. Residues 712–727 (YTVQIFQDAGSTIDGN) lie on the Extracellular side of the membrane. A helical membrane pass occupies residues 728-748 (VCTIIVGVVNFAATFIATILI). Over 749–754 (DRAGRK) the chain is Cytoplasmic. Residues 755 to 775 (VLLYVSNVMMVLTLFVLGGFF) form a helical membrane-spanning segment. At 776 to 794 (YCKSSGMDTSNVGWLPLSC) the chain is on the extracellular side. Residues 795 to 815 (FVIYILGFSLGFGPIPWLMMG) form a helical membrane-spanning segment. The Cytoplasmic portion of the chain corresponds to 816–821 (EILPAK). A helical membrane pass occupies residues 822–842 (IRGSAASVATAFNWSCTFVVT). At 843 to 855 (KSFQDMIDFMGAH) the chain is on the extracellular side. The chain crosses the membrane as a helical span at residues 856–876 (GAFWMFGAICFIGLFFVIFYV). The Cytoplasmic portion of the chain corresponds to 877-911 (PETQGKTLEDIERKMMGRVRRMSSVANIKPLSFNM). 2 positions are modified to phosphoserine: S899 and S900.

It belongs to the major facilitator superfamily. Sugar transporter (TC 2.A.1.1) family. Trehalose transporter subfamily.

Its subcellular location is the cell membrane. Low-capacity facilitative transporter for trehalose. Does not transport maltose, sucrose or lactose. Mediates the bidirectional transfer of trehalose. Responsible for the transport of trehalose synthesized in the fat body and the incorporation of trehalose into other tissues that require a carbon source, thereby regulating trehalose levels in the hemolymph. The chain is Facilitated trehalose transporter Tret1 from Drosophila virilis (Fruit fly).